Reading from the N-terminus, the 283-residue chain is uncharacterized protein (283 aa).

Residues Met1–Leu10 show a composition bias toward polar residues. Disordered stretches follow at residues Met1–Asn96 and Asp255–Ile283. Basic and acidic residues-rich tracts occupy residues Lys14–Lys34 and Ser44–Arg81.

Belongs to the chlamydial CPn_0705/CT_671/TC_0042 family.

This is an uncharacterized protein from Chlamydia muridarum (strain MoPn / Nigg).